The chain runs to 85 residues: Follicular dendritic cell secreted peptide (85 aa).

The signal sequence occupies residues 1-17 (MKKVLLLITAILAVAVG). Residues 75-83 (SAPTTPLPS) form an O-glycosylated at one site region.

O-glycosylated with core 1 or possibly core 8 glycans. Abundantly expressed in tonsil, lymph node, and trachea; strong expression in prostate; lower expression in thyroid, stomach, and colon.

Its subcellular location is the secreted. Its function is as follows. Can bind to the surface of B-lymphoma cells, but not T-lymphoma cells, consistent with a function as a secreted mediator acting upon B-cells. In Homo sapiens (Human), this protein is Follicular dendritic cell secreted peptide (FDCSP).